The following is a 315-amino-acid chain: Methionine import ATP-binding protein MetN (315 aa).

An ABC transporter domain is found at I2 to V219. Position 16 to 23 (G16 to S23) interacts with ATP.

Belongs to the ABC transporter superfamily. Methionine importer (TC 3.A.1.24) family. The complex is composed of two ATP-binding proteins (MetN), two transmembrane proteins (MetI) and a solute-binding protein (MetQ).

The protein localises to the cell inner membrane. The catalysed reaction is L-methionine(out) + ATP + H2O = L-methionine(in) + ADP + phosphate + H(+). It carries out the reaction D-methionine(out) + ATP + H2O = D-methionine(in) + ADP + phosphate + H(+). Functionally, part of the ABC transporter complex MetNIQ involved in methionine import. Responsible for energy coupling to the transport system. This is Methionine import ATP-binding protein MetN from Salmonella enteritidis.